The primary structure comprises 144 residues: Transmembrane protein 170A (144 aa).

Residues 1-50 (MEREGSGGGGGSAGLLQQILSLKLVPRVGNGTLCPNSTSLCSFPEMWYGV) lie on the Extracellular side of the membrane. Residues N30 and N36 are each glycosylated (N-linked (GlcNAc...) asparagine). A helical membrane pass occupies residues 51-71 (FLWALMSSVFFHVPAGLLALF). The Cytoplasmic portion of the chain corresponds to 72–85 (TLRHHKYGRFMSVS). A helical membrane pass occupies residues 86 to 106 (ILLMGIVGPITAGILTSAAIA). Residues 107–116 (GVYRAAGKEM) lie on the Extracellular side of the membrane. Residues 117–137 (IPFEALTLGTGQTFCVVVVSF) form a helical membrane-spanning segment. Over 138–144 (LRVLATL) the chain is Cytoplasmic.

It belongs to the TMEM170 family. In terms of assembly, interacts with RTN4.

It localises to the endoplasmic reticulum membrane. Its subcellular location is the nucleus envelope. Functionally, acts as a regulator of endoplasmic reticulum (ER) and nuclear envelope (NE) morphogenesis. Affects the ratio between tubular ER and ER sheets by promoting sheet formation at the expense of tubules. Influences NE expansion, nuclear pore complex formation and proper localization of inner nuclear membrane proteins. In Mus musculus (Mouse), this protein is Transmembrane protein 170A (Tmem170a).